Reading from the N-terminus, the 700-residue chain is DNA ligase (700 aa).

NAD(+) contacts are provided by residues 61–65 (DAEYD), 110–111 (SL), and E141. The N6-AMP-lysine intermediate role is filled by K143. NAD(+) contacts are provided by R164, E202, K321, and K345. Residues C439, C442, C457, and C462 each coordinate Zn(2+). Residues 619-700 (AVSNKLAGLQ…EFLRLLEDSK (82 aa)) enclose the BRCT domain.

Belongs to the NAD-dependent DNA ligase family. LigA subfamily. Requires Mg(2+) as cofactor. The cofactor is Mn(2+).

It catalyses the reaction NAD(+) + (deoxyribonucleotide)n-3'-hydroxyl + 5'-phospho-(deoxyribonucleotide)m = (deoxyribonucleotide)n+m + AMP + beta-nicotinamide D-nucleotide.. Its function is as follows. DNA ligase that catalyzes the formation of phosphodiester linkages between 5'-phosphoryl and 3'-hydroxyl groups in double-stranded DNA using NAD as a coenzyme and as the energy source for the reaction. It is essential for DNA replication and repair of damaged DNA. This Hydrogenobaculum sp. (strain Y04AAS1) protein is DNA ligase.